The primary structure comprises 311 residues: Bifunctional protein FolD (311 aa).

Residue 174-176 (GKG) participates in NADP(+) binding.

The protein belongs to the tetrahydrofolate dehydrogenase/cyclohydrolase family. In terms of assembly, homodimer.

The catalysed reaction is (6R)-5,10-methylene-5,6,7,8-tetrahydrofolate + NADP(+) = (6R)-5,10-methenyltetrahydrofolate + NADPH. It catalyses the reaction (6R)-5,10-methenyltetrahydrofolate + H2O = (6R)-10-formyltetrahydrofolate + H(+). It functions in the pathway one-carbon metabolism; tetrahydrofolate interconversion. Catalyzes the oxidation of 5,10-methylenetetrahydrofolate to 5,10-methenyltetrahydrofolate and then the hydrolysis of 5,10-methenyltetrahydrofolate to 10-formyltetrahydrofolate. The polypeptide is Bifunctional protein FolD (Pyrobaculum neutrophilum (strain DSM 2338 / JCM 9278 / NBRC 100436 / V24Sta) (Thermoproteus neutrophilus)).